A 447-amino-acid chain; its full sequence is Probable tRNA methyltransferase 9B (447 aa).

A Phosphoserine modification is found at Ser212. Disordered regions lie at residues 274-306 and 320-348; these read AWANSTVSQQPSRHPSLDLHAPEPFSTKGPNLD and WLRTPGTSDNFSGHKGGGSRRKEGGNFLD. Polar residues predominate over residues 276-286; it reads ANSTVSQQPSR.

This sequence belongs to the methyltransferase superfamily.

Functionally, may modify wobble uridines in specific arginine and glutamic acid tRNAs. Acts as a tumor suppressor by promoting the expression of LIN9. The protein is Probable tRNA methyltransferase 9B (Trmt9b) of Mus musculus (Mouse).